Here is a 98-residue protein sequence, read N- to C-terminus: NADH-ubiquinone oxidoreductase chain 4L (98 aa).

A run of 3 helical transmembrane segments spans residues 2–22 (PSIF…TLVF), 29–49 (SLLC…LIIL), and 61–81 (ILLL…LVMV).

This sequence belongs to the complex I subunit 4L family. As to quaternary structure, core subunit of respiratory chain NADH dehydrogenase (Complex I) which is composed of 45 different subunits.

It is found in the mitochondrion inner membrane. It catalyses the reaction a ubiquinone + NADH + 5 H(+)(in) = a ubiquinol + NAD(+) + 4 H(+)(out). Core subunit of the mitochondrial membrane respiratory chain NADH dehydrogenase (Complex I) which catalyzes electron transfer from NADH through the respiratory chain, using ubiquinone as an electron acceptor. Part of the enzyme membrane arm which is embedded in the lipid bilayer and involved in proton translocation. This Propithecus tattersalli (Golden-crowned Sifaka) protein is NADH-ubiquinone oxidoreductase chain 4L (MT-ND4L).